Reading from the N-terminus, the 584-residue chain is Isopropyl malate synthase htyA (584 aa).

The region spanning 39–317 (PIWLSTDLRD…ETGLDFSNLP (279 aa)) is the Pyruvate carboxyltransferase domain.

This sequence belongs to the alpha-IPM synthase/homocitrate synthase family. LeuA type 2 subfamily.

The catalysed reaction is 3-methyl-2-oxobutanoate + acetyl-CoA + H2O = (2S)-2-isopropylmalate + CoA + H(+). It participates in antifungal biosynthesis. Functionally, isopropyl malate synthase; part of the gene cluster that mediates the de novo generation of L-homotyrosine from acetyl-CoA and 4-hydroxyphenyl-pyruvate. L-homotyrosine is a building block of echinocandin B, a fungal lipidated cyclic hexapeptide that acts as an antifungal agent. L-homotyrosine 4-hydroxyphenyl-pyruvate first undergoes an aldol-type condensation by htyA with the C-2 of acetyl-CoA followed by the release of CoA to form 2-(4-hydroxybenzyl)-malate. This is followed by isomerization of 2-(4-hydroxy-benzyl)-malate to 3-(4-hydroxybenzyl)-malate by htyD. Thereafter, 3-(4-hydroxybenzyl)-malate undergoes decarboxylation and oxidation to form 2-oxo-4-(4-hydroxybenzyl)butanoic acid, coupled to reduction of NAD(+) to NADH by htyC. The product then undergoes transamination catalyzed by htyB to form L-homotyrosine. The protein is Isopropyl malate synthase htyA of Aspergillus rugulosus (Emericella rugulosa).